The following is a 178-amino-acid chain: ATP synthase subunit b (178 aa).

Residues 19-39 (ITGIGFVILLFIAIKYIVPAF) traverse the membrane as a helical segment.

This sequence belongs to the ATPase B chain family. As to quaternary structure, F-type ATPases have 2 components, F(1) - the catalytic core - and F(0) - the membrane proton channel. F(1) has five subunits: alpha(3), beta(3), gamma(1), delta(1), epsilon(1). F(0) has three main subunits: a(1), b(2) and c(10-14). The alpha and beta chains form an alternating ring which encloses part of the gamma chain. F(1) is attached to F(0) by a central stalk formed by the gamma and epsilon chains, while a peripheral stalk is formed by the delta and b chains.

The protein localises to the cell membrane. Its function is as follows. F(1)F(0) ATP synthase produces ATP from ADP in the presence of a proton or sodium gradient. F-type ATPases consist of two structural domains, F(1) containing the extramembraneous catalytic core and F(0) containing the membrane proton channel, linked together by a central stalk and a peripheral stalk. During catalysis, ATP synthesis in the catalytic domain of F(1) is coupled via a rotary mechanism of the central stalk subunits to proton translocation. Component of the F(0) channel, it forms part of the peripheral stalk, linking F(1) to F(0). This Kocuria rhizophila (strain ATCC 9341 / DSM 348 / NBRC 103217 / DC2201) protein is ATP synthase subunit b.